The sequence spans 151 residues: 3-hydroxyacyl-[acyl-carrier-protein] dehydratase FabZ (151 aa).

His54 is a catalytic residue.

The protein belongs to the thioester dehydratase family. FabZ subfamily. As to quaternary structure, oligomer. Post-translationally, the N-terminus is blocked.

The protein localises to the cytoplasm. The catalysed reaction is a (3R)-hydroxyacyl-[ACP] = a (2E)-enoyl-[ACP] + H2O. In terms of biological role, involved in unsaturated fatty acids biosynthesis. Catalyzes the dehydration of short chain beta-hydroxyacyl-ACPs and long chain saturated and unsaturated beta-hydroxyacyl-ACPs. This is 3-hydroxyacyl-[acyl-carrier-protein] dehydratase FabZ from Escherichia coli (strain SE11).